Here is a 210-residue protein sequence, read N- to C-terminus: SAP domain-containing ribonucleoprotein (210 aa).

An N-acetylalanine modification is found at A2. The SAP domain occupies 8–42 (LHKLKLAELKQECLARGLETKGIKQDLIHRLQAYL). Position 10 is an N6-acetyllysine (K10). Positions 45–64 (HAEEEANEEDVLGDETEEEE) are enriched in acidic residues. A disordered region spans residues 45-86 (HAEEEANEEDVLGDETEEEETKPIELPVKEEEPPEKTVDVAA). The span at 65–86 (TKPIELPVKEEEPPEKTVDVAA) shows a compositional bias: basic and acidic residues. N6-acetyllysine is present on K142. Residues 161-210 (VSSISRKSEDDEKLKKRKERFGIVTSSAGTGTTEDTEAKKRKRAERFGIA) are disordered. S163 is subject to Phosphoserine. The segment covering 184–193 (VTSSAGTGTT) has biased composition (polar residues).

This sequence belongs to the SAP domain-containing ribonucleoprotein family. Interacts with DDX39A. Interacts with FUS. Interacts (via the C-terminal domain) with DDX39B; the interaction is direct and facilitates RNA binding of DDX39B. Component of the transcription/export (TREX) complex at least composed of ALYREF/THOC4, DDX39B, SARNP/CIP29, CHTOP and the THO subcomplex; TREX seems to have dynamic structure involving ATP-dependent remodeling; in the complex interacts directly with DDX39B in a ATP-dependent manner which bridges it to ALYREF/THOC4. As to expression, low expression in spleen, liver, pancreas, testis, thymus, heart, and kidney. Increased levels are seen in hepatocellular carcinoma and pancreatic adenocarcinoma.

The protein resides in the nucleus. The protein localises to the nucleus speckle. Binds both single-stranded and double-stranded DNA with higher affinity for the single-stranded form. Specifically binds to scaffold/matrix attachment region DNA. Also binds single-stranded RNA. Enhances RNA unwinding activity of DDX39A. May participate in important transcriptional or translational control of cell growth, metabolism and carcinogenesis. Component of the TREX complex which is thought to couple mRNA transcription, processing and nuclear export, and specifically associates with spliced mRNA and not with unspliced pre-mRNA. The TREX complex is recruited to spliced mRNAs by a transcription-independent mechanism, binds to mRNA upstream of the exon-junction complex (EJC) and is recruited in a splicing- and cap-dependent manner to a region near the 5' end of the mRNA where it functions in mRNA export to the cytoplasm via the TAP/NXF1 pathway. Associates with DDX39B, which facilitates RNA binding of DDX39B and likely plays a role in mRNA export. This is SAP domain-containing ribonucleoprotein (SARNP) from Homo sapiens (Human).